A 410-amino-acid polypeptide reads, in one-letter code: Arginine deiminase (410 aa).

The Amidino-cysteine intermediate role is filled by C399.

The protein belongs to the arginine deiminase family.

The protein localises to the cytoplasm. It carries out the reaction L-arginine + H2O = L-citrulline + NH4(+). It functions in the pathway amino-acid degradation; L-arginine degradation via ADI pathway; carbamoyl phosphate from L-arginine: step 1/2. The sequence is that of Arginine deiminase from Listeria monocytogenes serotype 4b (strain F2365).